Reading from the N-terminus, the 266-residue chain is Glucosamine-6-phosphate deaminase (266 aa).

Aspartate 72 functions as the Proton acceptor; for enolization step in the catalytic mechanism. The active-site For ring-opening step is the aspartate 141. Catalysis depends on histidine 143, which acts as the Proton acceptor; for ring-opening step. Catalysis depends on glutamate 148, which acts as the For ring-opening step.

The protein belongs to the glucosamine/galactosamine-6-phosphate isomerase family. NagB subfamily. In terms of assembly, homohexamer.

The enzyme catalyses alpha-D-glucosamine 6-phosphate + H2O = beta-D-fructose 6-phosphate + NH4(+). It participates in amino-sugar metabolism; N-acetylneuraminate degradation; D-fructose 6-phosphate from N-acetylneuraminate: step 5/5. With respect to regulation, allosterically activated by N-acetylglucosamine 6-phosphate (GlcNAc6P). Its function is as follows. Catalyzes the reversible isomerization-deamination of glucosamine 6-phosphate (GlcN6P) to form fructose 6-phosphate (Fru6P) and ammonium ion. The protein is Glucosamine-6-phosphate deaminase of Citrobacter koseri (strain ATCC BAA-895 / CDC 4225-83 / SGSC4696).